We begin with the raw amino-acid sequence, 141 residues long: Nucleoside diphosphate kinase (141 aa).

Residues Lys11, Phe59, Arg87, Thr93, Arg104, and Asn114 each contribute to the ATP site. The Pros-phosphohistidine intermediate role is filled by His117.

It belongs to the NDK family. As to quaternary structure, homotetramer. Requires Mg(2+) as cofactor.

The protein resides in the cytoplasm. The catalysed reaction is a 2'-deoxyribonucleoside 5'-diphosphate + ATP = a 2'-deoxyribonucleoside 5'-triphosphate + ADP. It carries out the reaction a ribonucleoside 5'-diphosphate + ATP = a ribonucleoside 5'-triphosphate + ADP. Its function is as follows. Major role in the synthesis of nucleoside triphosphates other than ATP. The ATP gamma phosphate is transferred to the NDP beta phosphate via a ping-pong mechanism, using a phosphorylated active-site intermediate. This Bordetella petrii (strain ATCC BAA-461 / DSM 12804 / CCUG 43448) protein is Nucleoside diphosphate kinase.